A 165-amino-acid polypeptide reads, in one-letter code: Keratin-associated protein 5-7 (165 aa).

A run of 7 repeats spans residues 35 to 38 (CCVP), 41 to 44 (CCKP), 47 to 50 (CCVP), 116 to 119 (CCKP), 126 to 129 (CCKP), 145 to 148 (CCNP), and 155 to 158 (CCVP). The tract at residues 35–158 (CCVPVCCCKP…CCSQSSCCVP (124 aa)) is 7 X 4 AA repeats of C-C-X-P.

The protein belongs to the KRTAP type 5 family. In terms of assembly, interacts with hair keratins. As to expression, expressed in hair root but not in skin.

In terms of biological role, in the hair cortex, hair keratin intermediate filaments are embedded in an interfilamentous matrix, consisting of hair keratin-associated protein (KRTAP), which are essential for the formation of a rigid and resistant hair shaft through their extensive disulfide bond cross-linking with abundant cysteine residues of hair keratins. The matrix proteins include the high-sulfur and high-glycine-tyrosine keratins. This Homo sapiens (Human) protein is Keratin-associated protein 5-7 (KRTAP5-7).